Here is a 300-residue protein sequence, read N- to C-terminus: Cation-efflux pump FieF (300 aa).

Transmembrane regions (helical) follow at residues Leu11–Trp31, Leu40–Val60, Leu81–Gly101, and Pro114–Phe134. Zn(2+) is bound by residues Asp45 and Asp49. The Zn(2+) site is built by His153 and Asp157. The next 2 helical transmembrane spans lie at Ser156 to Thr176 and Phe182 to Val202.

Belongs to the cation diffusion facilitator (CDF) transporter (TC 2.A.4) family. FieF subfamily. As to quaternary structure, homodimer.

The protein resides in the cell inner membrane. The catalysed reaction is Zn(2+)(in) + H(+)(out) = Zn(2+)(out) + H(+)(in). It catalyses the reaction Cd(2+)(in) + H(+)(out) = Cd(2+)(out) + H(+)(in). It carries out the reaction Fe(2+)(in) + H(+)(out) = Fe(2+)(out) + H(+)(in). Divalent metal cation transporter which exports Zn(2+), Cd(2+) and possibly Fe(2+). May be involved in zinc and iron detoxification by efflux. In Pectobacterium atrosepticum (strain SCRI 1043 / ATCC BAA-672) (Erwinia carotovora subsp. atroseptica), this protein is Cation-efflux pump FieF.